The chain runs to 299 residues: Tyrosine recombinase XerC (299 aa).

One can recognise a Core-binding (CB) domain in the interval 1 to 85 (MDQHLDAYCM…AVRGFYKYLN (85 aa)). One can recognise a Tyr recombinase domain in the interval 106–285 (RLPKTLDTDR…DFQHLATVYD (180 aa)). Residues R146, K170, H237, R240, and H263 contribute to the active site. The active-site O-(3'-phospho-DNA)-tyrosine intermediate is the Y272.

This sequence belongs to the 'phage' integrase family. XerC subfamily. As to quaternary structure, forms a cyclic heterotetrameric complex composed of two molecules of XerC and two molecules of XerD.

The protein localises to the cytoplasm. Site-specific tyrosine recombinase, which acts by catalyzing the cutting and rejoining of the recombining DNA molecules. The XerC-XerD complex is essential to convert dimers of the bacterial chromosome into monomers to permit their segregation at cell division. It also contributes to the segregational stability of plasmids. The chain is Tyrosine recombinase XerC from Pseudomonas syringae pv. syringae (strain B728a).